Reading from the N-terminus, the 246-residue chain is Polyhedrin (246 aa).

The protein belongs to the polyhedrin family.

Its function is as follows. Major component of the virus occlusion bodies, which are large proteinaceous structures (polyhedra), that protect the virus from the outside environment for extended periods until they are ingested by insect larvae. The chain is Polyhedrin (PH) from Spodoptera exigua nuclear polyhedrosis virus (strain US) (SeMNPV).